The sequence spans 260 residues: Proteasome subunit alpha (260 aa).

The protein belongs to the peptidase T1A family. As to quaternary structure, the 20S proteasome core is composed of 14 alpha and 14 beta subunits that assemble into four stacked heptameric rings, resulting in a barrel-shaped structure. The two inner rings, each composed of seven catalytic beta subunits, are sandwiched by two outer rings, each composed of seven alpha subunits. The catalytic chamber with the active sites is on the inside of the barrel. Has a gated structure, the ends of the cylinder being occluded by the N-termini of the alpha-subunits. Is capped at one or both ends by the proteasome regulatory ATPase, PAN.

Its subcellular location is the cytoplasm. With respect to regulation, the formation of the proteasomal ATPase PAN-20S proteasome complex, via the docking of the C-termini of PAN into the intersubunit pockets in the alpha-rings, triggers opening of the gate for substrate entry. Interconversion between the open-gate and close-gate conformations leads to a dynamic regulation of the 20S proteasome proteolysis activity. Its function is as follows. Component of the proteasome core, a large protease complex with broad specificity involved in protein degradation. The polypeptide is Proteasome subunit alpha (Thermococcus gammatolerans (strain DSM 15229 / JCM 11827 / EJ3)).